A 435-amino-acid chain; its full sequence is 3-ketoacyl-CoA thiolase (435 aa).

The active-site Acyl-thioester intermediate is the Cys-98. Catalysis depends on proton acceptor residues His-391 and Cys-421.

It belongs to the thiolase-like superfamily. Thiolase family. In terms of assembly, heterotetramer of two alpha chains (FadJ) and two beta chains (FadI).

The protein localises to the cytoplasm. It carries out the reaction an acyl-CoA + acetyl-CoA = a 3-oxoacyl-CoA + CoA. Its pathway is lipid metabolism; fatty acid beta-oxidation. Functionally, catalyzes the final step of fatty acid oxidation in which acetyl-CoA is released and the CoA ester of a fatty acid two carbons shorter is formed. The protein is 3-ketoacyl-CoA thiolase of Vibrio cholerae serotype O1 (strain ATCC 39541 / Classical Ogawa 395 / O395).